We begin with the raw amino-acid sequence, 405 residues long: Syndecan-3 (405 aa).

The signal sequence occupies residues 1-22; it reads MPAELRRLAVLLLLLSARAALA. The Extracellular portion of the chain corresponds to 23-347; it reads QPWRNENYER…PQKNILERKE (325 aa). The interval 31-59 is disordered; sequence ERPVDLEGSGDDDPFGDDELDDIYSGSGS. Residues 38-52 are compositionally biased toward acidic residues; the sequence is GSGDDDPFGDDELDD. 5 O-linked (Xyl...) (glycosaminoglycan) serine glycosylation sites follow: Ser-39, Ser-55, Ser-57, Ser-59, and Ser-66. Disordered stretches follow at residues 134 to 159 and 191 to 301; these read TTTA…ATTT and TRAT…ELGN. The segment covering 191–201 has biased composition (low complexity); it reads TRATTLETPTT. The segment covering 202-237 has biased composition (polar residues); the sequence is SIPETSVLTEVTTSRLVPSSTAKPRSLPKPSTSRTA. O-linked (Xyl...) (glycosaminoglycan) serine glycosylation is found at Ser-280, Ser-283, and Ser-330. Residues 348–372 form a helical membrane-spanning segment; that stretch reads VLIAVIVGGVVGALFAAFLVMLLIY. Topologically, residues 373 to 405 are cytoplasmic; that stretch reads RMKKKDEGSYTLEEPKQANVTYQKPDKQEEFYA.

It belongs to the syndecan proteoglycan family. Post-translationally, O-glycosylated within the Thr/Ser-rich region which could interact with lectin domains on other molecules. Proximal chondrogenic central core of embryonic limb buds where cartilage differentiation is being initiated.

It localises to the membrane. Functionally, cell surface proteoglycan that may bear both heparan sulfate and chondroitin sulfate. The multiple functional domains provide potential sites for mediating the adhesive cell-matrix interactions and cytoskeletal reorganization involved in limb chondrogenesis. Interaction with other matrix ligands as well as phosphorylation and shedding of the ectodomain might be involved in cell shape changes that occur during chondrogenesis. Furthermore, shedding of the ectodomain might break the adhesive interactions that promoted condensation, thus facilitating the deposition of cartilage matrix molecules. This Gallus gallus (Chicken) protein is Syndecan-3 (SDC3).